The following is a 454-amino-acid chain: uncharacterized protein (454 aa).

Residues 1–18 (MRRFTLFVFFLSISIAYA) form the signal peptide.

This is an uncharacterized protein from Caenorhabditis elegans.